Here is a 444-residue protein sequence, read N- to C-terminus: tRNA-2-methylthio-N(6)-dimethylallyladenosine synthase (444 aa).

The region spanning 7–121 (KTFHVKSFGC…LPELIARAER (115 aa)) is the MTTase N-terminal domain. Positions 16, 52, 84, 158, 162, and 165 each coordinate [4Fe-4S] cluster. The Radical SAM core domain maps to 144–376 (GNQRPTAFLT…QALLNEQQQA (233 aa)). Positions 379–441 (EATVGRTTRL…PNSLGAEPLM (63 aa)) constitute a TRAM domain.

It belongs to the methylthiotransferase family. MiaB subfamily. Monomer. [4Fe-4S] cluster is required as a cofactor.

It is found in the cytoplasm. It catalyses the reaction N(6)-dimethylallyladenosine(37) in tRNA + (sulfur carrier)-SH + AH2 + 2 S-adenosyl-L-methionine = 2-methylsulfanyl-N(6)-dimethylallyladenosine(37) in tRNA + (sulfur carrier)-H + 5'-deoxyadenosine + L-methionine + A + S-adenosyl-L-homocysteine + 2 H(+). In terms of biological role, catalyzes the methylthiolation of N6-(dimethylallyl)adenosine (i(6)A), leading to the formation of 2-methylthio-N6-(dimethylallyl)adenosine (ms(2)i(6)A) at position 37 in tRNAs that read codons beginning with uridine. The sequence is that of tRNA-2-methylthio-N(6)-dimethylallyladenosine synthase from Sphingopyxis alaskensis (strain DSM 13593 / LMG 18877 / RB2256) (Sphingomonas alaskensis).